The chain runs to 955 residues: Anoctamin-4 (955 aa).

Residues 1-352 lie on the Cytoplasmic side of the membrane; that stretch reads MEASSSGITN…FGEKIGLYFA (352 aa). A disordered region spans residues 73–97; it reads KDDDSLLHPGNLTSTSEDTSRLEAG. The chain crosses the membrane as a helical span at residues 353-373; sequence WLGWYTGMLFPAAFIGLFVFL. Over 374-424 the chain is Extracellular; the sequence is YGVTTLDHCQVSKEVCQATDIIMCPVCDKYCPFMRLSDSCVYAKVTHLFDN. A helical transmembrane segment spans residues 425–445; the sequence is GATVFFAVFMAVWATVFLEFW. At 446-505 the chain is on the cytoplasmic side; it reads KRRRAVIAYDWDLIDWEEEEEEIRPQFEAKYSKKERMNPISGKPEPYQAFTDKCSRLIVS. The helical transmembrane segment at 506-526 threads the bilayer; the sequence is ASGIFFMICVVIAAVFGIVIY. The Extracellular segment spans residues 527–547; the sequence is RVVTVSTFAAFKWALIRNNSQ. Asparagine 544 carries an N-linked (GlcNAc...) asparagine glycan. The helical transmembrane segment at 548-568 threads the bilayer; sequence VATTGTAVCINFCIIMLLNVL. Residues 569-595 lie on the Cytoplasmic side of the membrane; the sequence is YEKVALLLTNLEQPRTESEWENSFTLK. A helical membrane pass occupies residues 596–616; sequence MFLFQFVNLNSSTFYIAFFLG. Topologically, residues 617-715 are extracellular; sequence RFTGHPGAYL…AYGLFDEYLE (99 aa). Residues 716–736 form a helical membrane-spanning segment; sequence MILQFGFTTIFVAAFPLAPLL. Topologically, residues 737–768 are cytoplasmic; the sequence is ALLNNIIEIRLDAYKFVTQWRRPLASRAKDIG. A helical membrane pass occupies residues 769-789; that stretch reads IWYGILEGIGILSVITNAFVI. Topologically, residues 790 to 885 are extracellular; that stretch reads AITSDFIPRL…QFWHVLAARL (96 aa). N-linked (GlcNAc...) asparagine glycans are attached at residues asparagine 824 and asparagine 837. A helical transmembrane segment spans residues 886–906; the sequence is AFIIVFEHLVFCIKHLISYLI. Over 907–955 the chain is Cytoplasmic; that stretch reads PDLPKDLRDRMRREKYLIQEMMYEAELERLQKERKERKKNGKAHHNEWP.

Belongs to the anoctamin family. Predominantly expressed in neuronal tissues. Expressed at low levels in ovary, uterus, heart and brain.

The protein localises to the cell membrane. The enzyme catalyses a 1,2-diacyl-sn-glycero-3-phospho-L-serine(in) = a 1,2-diacyl-sn-glycero-3-phospho-L-serine(out). The catalysed reaction is a beta-D-galactosyl-(1&lt;-&gt;1')-N-acylsphing-4-enine(out) = a beta-D-galactosyl-(1&lt;-&gt;1')-N-acylsphing-4-enine(in). It carries out the reaction a 1,2-diacyl-sn-glycero-3-phosphocholine(in) = a 1,2-diacyl-sn-glycero-3-phosphocholine(out). Functionally, has calcium-dependent phospholipid scramblase activity; scrambles phosphatidylserine, phosphatidylcholine and galactosylceramide. Does not exhibit calcium-activated chloride channel (CaCC) activity. The protein is Anoctamin-4 of Mus musculus (Mouse).